The primary structure comprises 781 residues: Potassium transporter 5 (781 aa).

The span at 1–11 shows a compositional bias: polar residues; it reads MTEPLHTSSNG. The tract at residues 1–24 is disordered; that stretch reads MTEPLHTSSNGGAERGPNAAFESE. Over 1-63 the chain is Cytoplasmic; the sequence is MTEPLHTSSN…AKVGWATTLH (63 aa). Residues 64-84 traverse the membrane as a helical segment; that stretch reads LAFQSIGVVYGDMGTSPLYVF. Residues 85–100 lie on the Extracellular side of the membrane; it reads SSTFTNGIKDTNDILG. The helical transmembrane segment at 101-121 threads the bilayer; the sequence is VMSLIIYTVVLLPLIKYCFIV. Residues 122–187 lie on the Cytoplasmic side of the membrane; sequence LRANDNGDGG…EKMENSPNFK (66 aa). A helical membrane pass occupies residues 188 to 208; that stretch reads IILFLVTILATSMVIGDGVLT. Residues 209-225 lie on the Extracellular side of the membrane; sequence PCISVLSAVGGIKESAK. Residues 226 to 246 traverse the membrane as a helical segment; the sequence is SLTQGQIAGIAIAILIVLFLV. Residues 247-257 lie on the Cytoplasmic side of the membrane; that stretch reads QRFGTDKVGYS. A helical membrane pass occupies residues 258–278; it reads FGPIILTWFIFIAGTGVYNLF. At 279–304 the chain is on the extracellular side; sequence KHDTGVLKAFNPKYIVDYFERNGKQG. A helical membrane pass occupies residues 305-325; sequence WISLGGVILCITGTEAMFADL. The Cytoplasmic portion of the chain corresponds to 326 to 334; sequence GHFNVRAIQ. A helical transmembrane segment spans residues 335–355; sequence IGFSVVLLPSVLLAYIGQAAY. The Extracellular portion of the chain corresponds to 356 to 381; the sequence is LRIYPEHVADTFYKSIPDPLYWPTFV. A helical membrane pass occupies residues 382–402; it reads VAVAAAIIASQAMISGAFAII. At 403 to 426 the chain is on the cytoplasmic side; that stretch reads AQSQILGCFPRVRVIHTSTKFHGQ. Residues 427–447 form a helical membrane-spanning segment; the sequence is VYIPEINYVLMVLCVAVTAIF. Over 448 to 458 the chain is Extracellular; that stretch reads QTTDKIGNAYG. The chain crosses the membrane as a helical span at residues 459–479; that stretch reads IAVVFVMFITTLLVTLVMVMI. Topologically, residues 480–481 are cytoplasmic; sequence WK. Residues 482-502 traverse the membrane as a helical segment; sequence TSLLWIALFPVIFGGAELIYL. At 503-512 the chain is on the extracellular side; that stretch reads SSAFYKFTQG. The helical transmembrane segment at 513–533 threads the bilayer; that stretch reads GYLPLVFSAILMFIMATWHYV. The Cytoplasmic portion of the chain corresponds to 534 to 781; it reads HVHRYKYELR…LLRVGMTYEI (248 aa). Residues 681-707 are disordered; the sequence is VTDPTSEVQDAMSSRNNSDQHTTEPRN. The span at 683–700 shows a compositional bias: polar residues; sequence DPTSEVQDAMSSRNNSDQ.

Belongs to the HAK/KUP transporter (TC 2.A.72.3) family. As to expression, expressed in root epidermis, parenchyma of stele tissue and primordial of the lateral root, root-shoot junctions and leaf sheaths. Expressed in germinated embryonic tissue, young tillers, flower organs and pedicels.

It localises to the cell membrane. The catalysed reaction is K(+)(in) = K(+)(out). Its function is as follows. High-affinity potassium transporter. Its potassium transporter activity does not seem to be affected by high sodium and low potassium concentrations in the extracellular environment. Invloved in salt stress tolerance by enhancing root potassium uptake and translocation to the shoot to prevent sodium influx during salt stress. Involved in the positive regulation of disease resistance against the rice grassy stunt virus by promoting potassium transport and increasing endogenous plant potassium. The protein is Potassium transporter 5 (HAK5) of Oryza sativa subsp. japonica (Rice).